Reading from the N-terminus, the 153-residue chain is Salivary C-type lectin 1 (153 aa).

The first 19 residues, 1–19 (MIFSLYLIVAISLADLTAA), serve as a signal peptide directing secretion. Residues 26–151 (KNRFCFPNVV…CSSTRRFVCE (126 aa)) enclose the C-type lectin domain. Cystine bridges form between C45/C150 and C122/C142.

Ca(2+) serves as cofactor. As to expression, expressed in female salivary gland. Not detected or low-level expression in female midgut and fat body.

It is found in the secreted. Functionally, salivary protein with carbohydrate-binding activity; exibits high affinity for D-mannose. Agglutinates host erythrocytes. Probably participates in mosquito innate immune responses to prevent microorganism multiplication in sugar and blood meals. Its function is as follows. (Microbial infection) Agglutinates Staphylococcus aureus in vitro. In terms of biological role, (Microbial infection) Agglutinates Candida albicans in vitro. (Microbial infection) Does not agglutinate Escherichia coli in vitro. The chain is Salivary C-type lectin 1 from Aedes albopictus (Asian tiger mosquito).